The primary structure comprises 278 residues: 4-deoxy-L-threo-5-hexosulose-uronate ketol-isomerase (278 aa).

H196, H198, E203, and H245 together coordinate Zn(2+).

The protein belongs to the KduI family. The cofactor is Zn(2+).

The enzyme catalyses 5-dehydro-4-deoxy-D-glucuronate = 3-deoxy-D-glycero-2,5-hexodiulosonate. Its pathway is glycan metabolism; pectin degradation; 2-dehydro-3-deoxy-D-gluconate from pectin: step 4/5. Its function is as follows. Catalyzes the isomerization of 5-dehydro-4-deoxy-D-glucuronate to 3-deoxy-D-glycero-2,5-hexodiulosonate. The chain is 4-deoxy-L-threo-5-hexosulose-uronate ketol-isomerase from Shigella flexneri.